We begin with the raw amino-acid sequence, 1168 residues long: Probable serine/threonine protein kinase IRE (1168 aa).

Disordered stretches follow at residues 1 to 165 (MSTT…GVES) and 377 to 444 (EKQN…KIQP). Residues 16 to 25 (PTTISTPTST) show a composition bias toward low complexity. Composition is skewed to basic and acidic residues over residues 39–54 (RHSD…KTDE) and 107–130 (QDDK…DARA). Composition is skewed to polar residues over residues 146 to 163 (QWSQ…NPGV) and 401 to 414 (TARS…NFRM). The C2H2-type; atypical zinc finger occupies 488–507 (CRICEVEIPVVHVEEHSRIC). 3 disordered regions span residues 546–566 (PRAV…DLDE), 602–622 (GTKD…PRNS), and 717–744 (SSNA…LNPR). The 290-residue stretch at 754–1043 (FEIIKPISRG…AGEVKQHHFF (290 aa)) folds into the Protein kinase domain. ATP is bound by residues 760-768 (ISRGAFGRV) and Lys783. Asp877 functions as the Proton acceptor in the catalytic mechanism. In terms of domain architecture, AGC-kinase C-terminal spans 1044-1144 (KDINWDTLAR…KNLSQLASIN (101 aa)).

The protein belongs to the protein kinase superfamily. AGC Ser/Thr protein kinase family. As to expression, highly expressed in roots, elongating root hair cells and pollen grains.

It catalyses the reaction L-seryl-[protein] + ATP = O-phospho-L-seryl-[protein] + ADP + H(+). The catalysed reaction is L-threonyl-[protein] + ATP = O-phospho-L-threonyl-[protein] + ADP + H(+). In terms of biological role, modulates root tip growth. May play a common role in the tip growth of plant cells. The protein is Probable serine/threonine protein kinase IRE of Arabidopsis thaliana (Mouse-ear cress).